The sequence spans 58 residues: UPF0391 membrane protein Shewmr4_2671 (58 aa).

A run of 2 helical transmembrane segments spans residues 6 to 26 (LMFL…IAGA) and 28 to 48 (AGIA…SLLV).

Belongs to the UPF0391 family.

It localises to the cell membrane. The polypeptide is UPF0391 membrane protein Shewmr4_2671 (Shewanella sp. (strain MR-4)).